The sequence spans 151 residues: HTH-type transcriptional regulator FL11 (151 aa).

Positions 5–66 constitute an HTH asnC-type domain; it reads LDDIDKKIIE…VVNPEALGYN (62 aa). The H-T-H motif DNA-binding region spans 24 to 43; the sequence is LREISKITGLAESTIHERIK. Residue 98–104 participates in L-arginine binding; the sequence is ETTGDYD. L-lysine contacts are provided by residues Asn-118, Asp-122, and 133–135; that span reads THT. Residues Asp-122 and 133-135 contribute to the L-arginine site; that span reads THT.

As to quaternary structure, homodimer. Binds DNA as a dimer and an octamer.

In the famine mode, FL11 forms dimers and acts as a repressor, leading to growth arrest. In the feast mode, in the presence of high concentrations of lysine or arginine, four dimers assemble into an octamer and cover the fl11 and lysine biosynthesis promoters. This leads to the inhibition of fl11 expression and lysine biosynthesis, decrease of the FL11 concentration in the cell, derepression of the target genes and activation of the metabolism. Its function is as follows. DNA-binding protein involved in the repression of transcription of a large number of genes, thereby arresting growth, in response to environmental changes. This chain is HTH-type transcriptional regulator FL11, found in Pyrococcus furiosus (strain ATCC 43587 / DSM 3638 / JCM 8422 / Vc1).